A 321-amino-acid polypeptide reads, in one-letter code: Ribose-phosphate pyrophosphokinase 2 (321 aa).

Positions 130, 132, and 145 each coordinate Mg(2+). Serine 172 carries the post-translational modification Phosphoserine.

Belongs to the ribose-phosphate pyrophosphokinase family.

It is found in the cytoplasm. The enzyme catalyses D-ribose 5-phosphate + ATP = 5-phospho-alpha-D-ribose 1-diphosphate + AMP + H(+). Its pathway is metabolic intermediate biosynthesis; 5-phospho-alpha-D-ribose 1-diphosphate biosynthesis; 5-phospho-alpha-D-ribose 1-diphosphate from D-ribose 5-phosphate (route I): step 1/1. 5-phosphoribose 1-diphosphate synthase involved in nucleotide, histidine, and tryptophan biosynthesis. Active in heteromultimeric complexes with other 5-phosphoribose 1-diphosphate synthases. This Schizosaccharomyces pombe (strain 972 / ATCC 24843) (Fission yeast) protein is Ribose-phosphate pyrophosphokinase 2.